The following is a 331-amino-acid chain: 4-hydroxy-3-methylbut-2-enyl diphosphate reductase (331 aa).

[4Fe-4S] cluster is bound at residue cysteine 12. (2E)-4-hydroxy-3-methylbut-2-enyl diphosphate contacts are provided by histidine 43 and histidine 81. Dimethylallyl diphosphate-binding residues include histidine 43 and histidine 81. 2 residues coordinate isopentenyl diphosphate: histidine 43 and histidine 81. Cysteine 103 lines the [4Fe-4S] cluster pocket. A (2E)-4-hydroxy-3-methylbut-2-enyl diphosphate-binding site is contributed by histidine 131. Residue histidine 131 participates in dimethylallyl diphosphate binding. Histidine 131 serves as a coordination point for isopentenyl diphosphate. The active-site Proton donor is the glutamate 133. Threonine 170 contacts (2E)-4-hydroxy-3-methylbut-2-enyl diphosphate. Residue cysteine 198 participates in [4Fe-4S] cluster binding. (2E)-4-hydroxy-3-methylbut-2-enyl diphosphate-binding residues include serine 226, asparagine 228, and serine 271. The dimethylallyl diphosphate site is built by serine 226, asparagine 228, and serine 271. Residues serine 226, asparagine 228, and serine 271 each coordinate isopentenyl diphosphate.

This sequence belongs to the IspH family. [4Fe-4S] cluster serves as cofactor.

It carries out the reaction isopentenyl diphosphate + 2 oxidized [2Fe-2S]-[ferredoxin] + H2O = (2E)-4-hydroxy-3-methylbut-2-enyl diphosphate + 2 reduced [2Fe-2S]-[ferredoxin] + 2 H(+). It catalyses the reaction dimethylallyl diphosphate + 2 oxidized [2Fe-2S]-[ferredoxin] + H2O = (2E)-4-hydroxy-3-methylbut-2-enyl diphosphate + 2 reduced [2Fe-2S]-[ferredoxin] + 2 H(+). Its pathway is isoprenoid biosynthesis; dimethylallyl diphosphate biosynthesis; dimethylallyl diphosphate from (2E)-4-hydroxy-3-methylbutenyl diphosphate: step 1/1. The protein operates within isoprenoid biosynthesis; isopentenyl diphosphate biosynthesis via DXP pathway; isopentenyl diphosphate from 1-deoxy-D-xylulose 5-phosphate: step 6/6. Functionally, catalyzes the conversion of 1-hydroxy-2-methyl-2-(E)-butenyl 4-diphosphate (HMBPP) into a mixture of isopentenyl diphosphate (IPP) and dimethylallyl diphosphate (DMAPP). Acts in the terminal step of the DOXP/MEP pathway for isoprenoid precursor biosynthesis. In Listeria monocytogenes serovar 1/2a (strain ATCC BAA-679 / EGD-e), this protein is 4-hydroxy-3-methylbut-2-enyl diphosphate reductase.